The following is a 92-amino-acid chain: Mediator-associated protein 3 (92 aa).

Residues 13–70 (KDLRRKIKKTVKKILESSNLYKITEIKAREEASLKLDLDLSQDPYKVIVKEEVENFLE) form the DEK-C domain.

In terms of assembly, associated with the Mediator complex.

The protein localises to the nucleus. The protein is Mediator-associated protein 3 of Arabidopsis thaliana (Mouse-ear cress).